Here is a 576-residue protein sequence, read N- to C-terminus: K(+)/H(+) antiporter NhaP2 (576 aa).

Transmembrane regions (helical) follow at residues 6 to 26 (INSFFLIGALLTAVSVLLSPM), 34 to 54 (ILLIFLAVGILAGEDGPGGIL), 58 to 78 (YSTAYLVSNLALAIILLDGGM), 87 to 107 (VALWPALSLATFGVAITTSIT), 109 to 129 (MMAAWLFDLHWLQGLLVGAIV), 163 to 183 (PMAVFLTVTLIAILANVDTEM), 185 to 205 (FSFMFISFIKQFGLGICLGLG), 219 to 239 (LADGLYSILVLSGGLIIYAAS), 242 to 262 (LGGSGILSIYLVGLFLGNKPT), 271 to 291 (VLDGMTWVSQIGMFLVLGLLL), 299 to 319 (ILIPGFALAFGMILFARPVAV), 335 to 355 (WFISWVGLRGAVPIILAVFPM), and 359 to 379 (LPGAQLYFNLAFFVVLVSLLV). The RCK C-terminal domain maps to 405-486 (SGVEIYPSSE…LEALSNLFSQ (82 aa)).

Belongs to the monovalent cation:proton antiporter 1 (CPA1) transporter (TC 2.A.36) family. NhaP2 subfamily.

The protein resides in the cell inner membrane. It catalyses the reaction K(+)(in) + H(+)(out) = K(+)(out) + H(+)(in). Its function is as follows. K(+)/H(+) antiporter that extrudes potassium in exchange for external protons and maintains the internal concentration of potassium under toxic levels. In Shewanella baltica (strain OS195), this protein is K(+)/H(+) antiporter NhaP2.